The primary structure comprises 35 residues: MSDIN-like toxin proprotein 1 (35 aa).

Residues 1–10 constitute a propeptide that is removed on maturation; sequence MSDINATRLP. A cross-link (cyclopeptide (Ile-Pro)) is located at residues 11 to 20; sequence IIIVLGLIIP. Positions 21 to 35 are excised as a propeptide; the sequence is LCVSDIEMILTRGER.

It belongs to the MSDIN fungal toxin family. In terms of processing, processed by the macrocyclase-peptidase enzyme POPB to yield a toxic cyclic decapeptide. POPB first removes 10 residues from the N-terminus. Conformational trapping of the remaining peptide forces the enzyme to release this intermediate rather than proceed to macrocyclization. The enzyme rebinds the remaining peptide in a different conformation and catalyzes macrocyclization of the N-terminal 10 residues.

Its function is as follows. Probable toxin that belongs to the MSDIN-like toxin family responsible for a large number of food poisoning cases and deaths. This Amanita rimosa protein is MSDIN-like toxin proprotein 1.